A 215-amino-acid chain; its full sequence is Ceramide-1-phosphate transfer protein (215 aa).

Residues Asp57, Lys61, Arg107, Arg111, and His151 each contribute to the an N-acylsphingoid base 1-phosphate site.

This sequence belongs to the GLTP family.

It localises to the cytoplasm. The protein localises to the cytosol. The protein resides in the golgi apparatus. It is found in the trans-Golgi network membrane. Its subcellular location is the cell membrane. It localises to the endosome membrane. The protein localises to the nucleus outer membrane. It catalyses the reaction N-(hexadecanoyl)-sphing-4-enine-1-phosphate(in) = N-(hexadecanoyl)-sphing-4-enine-1-phosphate(out). The catalysed reaction is N-(9Z-octadecenoyl)-sphing-4-enine-1-phosphate(in) = N-(9Z-octadecenoyl)-sphing-4-enine-1-phosphate(out). Mediates the intracellular transfer of ceramide-1-phosphate (C1P) between organelle membranes and the cell membrane. Required for normal structure of the Golgi stacks. Can bind phosphoceramides with a variety of aliphatic chains, but has a preference for lipids with saturated C16:0 or monounsaturated C18:1 aliphatic chains, and is inefficient with phosphoceramides containing lignoceryl (C24:0). Plays a role in the regulation of the cellular levels of ceramide-1-phosphate, and thereby contributes to the regulation of phospholipase PLA2G4A activity and the release of arachidonic acid. Has no activity with galactosylceramide, lactosylceramide, sphingomyelin, phosphatidylcholine, phosphatidic acid and ceramide. C1P transfer is stimulated by phosphatidylserine in C1P source vesicles. Regulates autophagy and pyroptosis, but not apoptosis. The chain is Ceramide-1-phosphate transfer protein (cptp) from Xenopus tropicalis (Western clawed frog).